A 550-amino-acid chain; its full sequence is Glutamine--tRNA ligase (550 aa).

The short motif at 34 to 44 is the 'HIGH' region element; the sequence is PEPNGYLHLGH. Residues 35 to 37 and 41 to 47 contribute to the ATP site; these read EPN and HLGHAKS. Residues Asp67 and Tyr212 each contribute to the L-glutamine site. Residues Thr231, 261–262, and 269–271 each bind ATP; these read RL and LSK. Residues 268–272 carry the 'KMSKS' region motif; that stretch reads VLSKR.

Belongs to the class-I aminoacyl-tRNA synthetase family. As to quaternary structure, monomer.

It is found in the cytoplasm. The catalysed reaction is tRNA(Gln) + L-glutamine + ATP = L-glutaminyl-tRNA(Gln) + AMP + diphosphate. This is Glutamine--tRNA ligase from Buchnera aphidicola subsp. Baizongia pistaciae (strain Bp).